Here is a 498-residue protein sequence, read N- to C-terminus: Glycerol kinase (498 aa).

Residue Thr-12 participates in ADP binding. ATP is bound by residues Thr-12, Thr-13, and Ser-14. Thr-12 is a sn-glycerol 3-phosphate binding site. Arg-16 serves as a coordination point for ADP. 4 residues coordinate sn-glycerol 3-phosphate: Arg-82, Glu-83, Tyr-134, and Asp-243. Glycerol is bound by residues Arg-82, Glu-83, Tyr-134, Asp-243, and Gln-244. Thr-265 and Gly-308 together coordinate ADP. 4 residues coordinate ATP: Thr-265, Gly-308, Gln-312, and Gly-409. 2 residues coordinate ADP: Gly-409 and Asn-413.

It belongs to the FGGY kinase family. As to quaternary structure, homotetramer and homodimer (in equilibrium).

It catalyses the reaction glycerol + ATP = sn-glycerol 3-phosphate + ADP + H(+). It functions in the pathway polyol metabolism; glycerol degradation via glycerol kinase pathway; sn-glycerol 3-phosphate from glycerol: step 1/1. With respect to regulation, activated by phosphorylation and inhibited by fructose 1,6-bisphosphate (FBP). Its function is as follows. Key enzyme in the regulation of glycerol uptake and metabolism. Catalyzes the phosphorylation of glycerol to yield sn-glycerol 3-phosphate. This chain is Glycerol kinase, found in Agathobacter rectalis (strain ATCC 33656 / DSM 3377 / JCM 17463 / KCTC 5835 / VPI 0990) (Eubacterium rectale).